We begin with the raw amino-acid sequence, 79 residues long: U-actitoxin-Bgr3d (79 aa).

Residues methionine 1–alanine 21 form the signal peptide. Residues glutamine 22–glutamine 38 constitute a propeptide that is removed on maturation. 3 cysteine pairs are disulfide-bonded: cysteine 44-cysteine 76, cysteine 46-cysteine 69, and cysteine 59-cysteine 77.

Belongs to the sea anemone type 3 (BDS) potassium channel toxin family.

The protein localises to the secreted. It is found in the nematocyst. Its function is as follows. Potently and selectively inhibits voltage-gated potassium channels Kv11/KCNH/ERG. Acts as a gating-modifier toxin that shifts the voltage-dependence of ERG activation in the positive direction and suppresses its current amplitudes elicited by strong depolarizing pulses that maximally activate the channels. This Bunodosoma granuliferum (Red warty sea anemone) protein is U-actitoxin-Bgr3d.